We begin with the raw amino-acid sequence, 328 residues long: Biotin synthase (328 aa).

Residues 41–260 (TAIETASLLS…VALARILMPA (220 aa)) form the Radical SAM core domain. [4Fe-4S] cluster contacts are provided by cysteine 56, cysteine 60, and cysteine 63. 4 residues coordinate [2Fe-2S] cluster: cysteine 100, cysteine 131, cysteine 191, and arginine 264.

Belongs to the radical SAM superfamily. Biotin synthase family. In terms of assembly, homodimer. The cofactor is [4Fe-4S] cluster. It depends on [2Fe-2S] cluster as a cofactor.

It catalyses the reaction (4R,5S)-dethiobiotin + (sulfur carrier)-SH + 2 reduced [2Fe-2S]-[ferredoxin] + 2 S-adenosyl-L-methionine = (sulfur carrier)-H + biotin + 2 5'-deoxyadenosine + 2 L-methionine + 2 oxidized [2Fe-2S]-[ferredoxin]. It participates in cofactor biosynthesis; biotin biosynthesis; biotin from 7,8-diaminononanoate: step 2/2. Catalyzes the conversion of dethiobiotin (DTB) to biotin by the insertion of a sulfur atom into dethiobiotin via a radical-based mechanism. The polypeptide is Biotin synthase (Cereibacter sphaeroides (strain ATCC 17023 / DSM 158 / JCM 6121 / CCUG 31486 / LMG 2827 / NBRC 12203 / NCIMB 8253 / ATH 2.4.1.) (Rhodobacter sphaeroides)).